The following is a 147-amino-acid chain: Hemoglobin subunit beta (147 aa).

Val-2 is subject to N-acetylvaline. A Globin domain is found at 3-147 (HLSAEEKGHI…VATALAHKYH (145 aa)). Lys-60 carries the N6-acetyllysine modification. His-64 lines the heme b pocket. N6-acetyllysine is present on Lys-83. Residue His-93 coordinates heme b. Cys-94 carries the S-nitrosocysteine modification. Lys-145 bears the N6-acetyllysine mark.

The protein belongs to the globin family. Heterotetramer of two alpha chains and two beta chains. Red blood cells.

In terms of biological role, involved in oxygen transport from the lung to the various peripheral tissues. The chain is Hemoglobin subunit beta (HBB) from Sminthopsis crassicaudata (Fat-tailed dunnart).